The primary structure comprises 430 residues: Isochorismate synthase MenF (430 aa).

K187 (proton acceptor) is an active-site residue. Residue E237 is the Proton donor of the active site. Mg(2+) contacts are provided by E281 and E414.

It belongs to the isochorismate synthase family. It depends on Mg(2+) as a cofactor.

The catalysed reaction is chorismate = isochorismate. It functions in the pathway quinol/quinone metabolism; 1,4-dihydroxy-2-naphthoate biosynthesis; 1,4-dihydroxy-2-naphthoate from chorismate: step 1/7. The protein operates within quinol/quinone metabolism; menaquinone biosynthesis. Its function is as follows. Catalyzes the conversion of chorismate to isochorismate. The sequence is that of Isochorismate synthase MenF from Haemophilus influenzae (strain ATCC 51907 / DSM 11121 / KW20 / Rd).